The sequence spans 427 residues: Riboflavin transporter rft-1 (427 aa).

Residues 1 to 2 are Cytoplasmic-facing; it reads MK. A helical transmembrane segment spans residues 3 to 23; sequence TFLFTFCLVAIFGSSSWIGTN. At 24-42 the chain is on the extracellular side; that stretch reads SVWMELSLLTAKLPEGWNL. The chain crosses the membrane as a helical span at residues 43-63; the sequence is PSYLSAIVQIACLGPLIYSII. The Cytoplasmic segment spans residues 64–73; it reads HKGIKMTIPT. Residues 74-94 traverse the membrane as a helical segment; the sequence is VPLIFIFMVLACICQLGLCFF. The Extracellular segment spans residues 95-111; it reads WDDTGYIFGAIRSWPLY. Residues 112 to 132 traverse the membrane as a helical segment; it reads LLLFGLAIVDAISSVLFLPFM. At 133–139 the chain is on the cytoplasmic side; that stretch reads AQFHPSF. A helical membrane pass occupies residues 140-160; the sequence is LNAYFVGMGLSALIPSLLSLI. Over 161–184 the chain is Extracellular; that stretch reads QGTSNYWCDDNKTPHYYPPRFSVS. A helical transmembrane segment spans residues 185 to 205; sequence MFFLINFFFTCAAVAAFLVLY. The Cytoplasmic portion of the chain corresponds to 206 to 261; that stretch reads KIGAHKNSSQVEPEPKHSIQIIQGDSTTDVNEVNTESSFQETSSIPDSSSATGARL. Residues 262 to 282 traverse the membrane as a helical segment; that stretch reads AFLLLTTALVNAQMNGIVTSV. Topologically, residues 283-297 are extracellular; it reads QSYATLVYSQNTYHY. The helical transmembrane segment at 298–318 threads the bilayer; sequence AVTLSNVISPLASYLQFFVKI. The Cytoplasmic portion of the chain corresponds to 319–322; that stretch reads RSLP. The chain crosses the membrane as a helical span at residues 323-343; it reads ILAFLTLCSSLTTAVIIYLAA. Residues 344 to 353 lie on the Extracellular side of the membrane; the sequence is LSPNWIFNSE. Residues 354–374 traverse the membrane as a helical segment; sequence TAGTIISIASSLIAAGLHSYL. Topologically, residues 375–391 are cytoplasmic; the sequence is RVMFAALLREGNQKESR. Residues 392-412 form a helical membrane-spanning segment; that stretch reads LFWCGAFIQIGSFTGSAIMFP. Residues 413 to 427 are Extracellular-facing; that stretch reads LVNVWKLFHSAPSCR.

This sequence belongs to the riboflavin transporter family. In terms of tissue distribution, expressed in intestine.

The protein localises to the cell membrane. The catalysed reaction is riboflavin(in) = riboflavin(out). Its activity is regulated as follows. Activity is strongly inhibited by riboflavin analogs, such as lumiflavin and lumichrome. Its function is as follows. Riboflavin transporter. Riboflavin transport is Na(+)-independent but pH-sensitive. The chain is Riboflavin transporter rft-1 from Caenorhabditis elegans.